Here is a 278-residue protein sequence, read N- to C-terminus: Bifunctional protein FolD (278 aa).

NADP(+)-binding positions include 163–165 (GRS), S188, and V229.

It belongs to the tetrahydrofolate dehydrogenase/cyclohydrolase family. As to quaternary structure, homodimer.

The catalysed reaction is (6R)-5,10-methylene-5,6,7,8-tetrahydrofolate + NADP(+) = (6R)-5,10-methenyltetrahydrofolate + NADPH. It carries out the reaction (6R)-5,10-methenyltetrahydrofolate + H2O = (6R)-10-formyltetrahydrofolate + H(+). It functions in the pathway one-carbon metabolism; tetrahydrofolate interconversion. Functionally, catalyzes the oxidation of 5,10-methylenetetrahydrofolate to 5,10-methenyltetrahydrofolate and then the hydrolysis of 5,10-methenyltetrahydrofolate to 10-formyltetrahydrofolate. The chain is Bifunctional protein FolD from Exiguobacterium sp. (strain ATCC BAA-1283 / AT1b).